The primary structure comprises 37 residues: Mu-thomitoxin-Hme1a (37 aa).

3 disulfide bridges follow: C2/C18, C9/C22, and C17/C33. Phenylalanine amide is present on F37.

This sequence belongs to the neurotoxin 01 (U2-agtx) family. Post-translationally, contains 3 disulfide bonds. In terms of tissue distribution, expressed by the venom gland.

The protein localises to the secreted. Its function is as follows. Blocks the Nav1.2/SCN2A, Nav1.4/SCN4A, and Nav1.6/SCN8A sodium channels. Reduces the peak amplitude of the sodium current and negatively shifts the steady-state inactivation process. Does not shift the threshold potential of activation or the voltage corresponding to maximal current. Does not change the reversal potential of the sodium current. May act on site 1 of the receptor. This is Mu-thomitoxin-Hme1a from Heriaeus mellotteei (Crab spider).